The chain runs to 690 residues: Iron-sulfur clusters transporter ATM1, mitochondrial (690 aa).

The N-terminal 26 residues, 1 to 26 (MLLLPRCPVIGRIVRSKFRSGLIRNH), are a transit peptide targeting the mitochondrion. Topologically, residues 27 to 110 (SPVIFTVSKL…PKGNNKVRIR (84 aa)) are mitochondrial matrix. The helical transmembrane segment at 111–132 (VLIALGLLISAKILNVQVPFFF) threads the bilayer. Residues 111 to 401 (VLIALGLLIS…LGSVYRDLKQ (291 aa)) form the ABC transmembrane type-1 domain. The Mitochondrial intermembrane portion of the chain corresponds to 133–155 (KQTIDSMNIAWDDPTVALPAAIG). The chain crosses the membrane as a helical span at residues 156 to 179 (LTILCYGVARFGSVLFGELRNAVF). Topologically, residues 180–228 (AKVAQNAIRTVSLQTFQHLMKLDLGWHLSRQTGGLTRAMDRGTKGISQV) are mitochondrial matrix. The chain crosses the membrane as a helical span at residues 229 to 252 (LTAMVFHIIPISFEISVVCGILTY). Residue Gln-253 is a topological domain, mitochondrial intermembrane. The chain crosses the membrane as a helical span at residues 254 to 274 (FGASFAAITFSTMLLYSIFTI). Topologically, residues 275-340 (KTTAWRTHFR…SQIKVSQSLA (66 aa)) are mitochondrial matrix. Glutathione-binding positions include 280–284 (RTHFR) and 343–346 (NSGQ). The chain crosses the membrane as a helical span at residues 341–359 (FLNSGQNLIFTTALTAMMY). The Mitochondrial intermembrane portion of the chain corresponds to 360 to 374 (MGCTGVIGGNLTVGD). Residues 375–396 (LVLINQLVFQLSVPLNFLGSVY) traverse the membrane as a helical segment. Gly-393 serves as a coordination point for glutathione. Residues 397-690 (RDLKQSLIDM…ENELKDQQEL (294 aa)) lie on the Mitochondrial matrix side of the membrane. Residues 436 to 672 (ITFENVTFGY…PGSLYRELWT (237 aa)) enclose the ABC transporter domain. Residues Tyr-445 and 469–480 (GSSGSGKSTILK) each bind ATP.

It belongs to the ABC transporter superfamily. ABCB family. Heavy Metal importer (TC 3.A.1.210) subfamily. As to quaternary structure, homodimer.

Its subcellular location is the mitochondrion inner membrane. Functionally, performs an essential function in the generation of cytoplasmic iron-sulfur proteins by mediating the ATP-dependent export of Fe/S cluster precursors synthesized by NFS1 and other mitochondrial proteins. Hydrolyzes ATP. Binds glutathione and may function by transporting a glutathione-conjugated iron-sulfur compound. The polypeptide is Iron-sulfur clusters transporter ATM1, mitochondrial (Saccharomyces cerevisiae (strain ATCC 204508 / S288c) (Baker's yeast)).